A 638-amino-acid chain; its full sequence is Threonine--tRNA ligase (638 aa).

Residues 1–61 (MPKITLPDGT…KNDSKVVIIT (61 aa)) form the TGS domain. Positions 242–533 (DHRKLGKKHS…LIEQYEAKFP (292 aa)) are catalytic. Residues Cys333, His384, and His510 each coordinate Zn(2+).

The protein belongs to the class-II aminoacyl-tRNA synthetase family. As to quaternary structure, homodimer. Requires Zn(2+) as cofactor.

Its subcellular location is the cytoplasm. The catalysed reaction is tRNA(Thr) + L-threonine + ATP = L-threonyl-tRNA(Thr) + AMP + diphosphate + H(+). In terms of biological role, catalyzes the attachment of threonine to tRNA(Thr) in a two-step reaction: L-threonine is first activated by ATP to form Thr-AMP and then transferred to the acceptor end of tRNA(Thr). Also edits incorrectly charged L-seryl-tRNA(Thr). The sequence is that of Threonine--tRNA ligase from Prochlorococcus marinus (strain MIT 9515).